We begin with the raw amino-acid sequence, 542 residues long: CTP synthase (542 aa).

The amidoligase domain stretch occupies residues 1–265; sequence MTRFIFITGG…DVQVCRHFHL (265 aa). CTP is bound at residue serine 13. Serine 13 provides a ligand contact to UTP. ATP contacts are provided by residues 14 to 19 and aspartate 71; that span reads SLGKGL. Mg(2+) is bound by residues aspartate 71 and glutamate 139. Residues 146–148, 186–191, and lysine 222 contribute to the CTP site; these read DIE and KTKPTQ. UTP is bound by residues 186 to 191 and lysine 222; that span reads KTKPTQ. Residues 291–541 form the Glutamine amidotransferase type-1 domain; the sequence is TIAVVGKYTS…VQAAITQSRL (251 aa). L-glutamine is bound at residue glycine 353. Cysteine 380 acts as the Nucleophile; for glutamine hydrolysis in catalysis. L-glutamine contacts are provided by residues 381–384, glutamate 404, and arginine 469; that span reads FGMQ. Residues histidine 514 and glutamate 516 contribute to the active site.

Belongs to the CTP synthase family. As to quaternary structure, homotetramer.

The enzyme catalyses UTP + L-glutamine + ATP + H2O = CTP + L-glutamate + ADP + phosphate + 2 H(+). It catalyses the reaction L-glutamine + H2O = L-glutamate + NH4(+). It carries out the reaction UTP + NH4(+) + ATP = CTP + ADP + phosphate + 2 H(+). It participates in pyrimidine metabolism; CTP biosynthesis via de novo pathway; CTP from UDP: step 2/2. Allosterically activated by GTP, when glutamine is the substrate; GTP has no effect on the reaction when ammonia is the substrate. The allosteric effector GTP functions by stabilizing the protein conformation that binds the tetrahedral intermediate(s) formed during glutamine hydrolysis. Inhibited by the product CTP, via allosteric rather than competitive inhibition. Its function is as follows. Catalyzes the ATP-dependent amination of UTP to CTP with either L-glutamine or ammonia as the source of nitrogen. Regulates intracellular CTP levels through interactions with the four ribonucleotide triphosphates. This chain is CTP synthase, found in Rhodospirillum rubrum (strain ATCC 11170 / ATH 1.1.1 / DSM 467 / LMG 4362 / NCIMB 8255 / S1).